A 299-amino-acid chain; its full sequence is Protease HtpX homolog (299 aa).

A run of 2 helical transmembrane segments spans residues 19–39 and 41–61; these read LFIV…VWYF and WGLT…WIAY. Residue His-146 coordinates Zn(2+). The active site involves Glu-147. His-150 lines the Zn(2+) pocket. The next 2 helical transmembrane spans lie at 156-176 and 198-218; these read ILLM…RDVM and IILL…VLII. Zn(2+) is bound at residue Glu-227.

Belongs to the peptidase M48B family. It depends on Zn(2+) as a cofactor.

The protein resides in the cell membrane. The chain is Protease HtpX homolog from Thermoanaerobacter pseudethanolicus (strain ATCC 33223 / 39E) (Clostridium thermohydrosulfuricum).